Consider the following 409-residue polypeptide: Aspartic protease pepA (409 aa).

The N-terminal stretch at 1–19 (MPSIVSLTAALTFVGAVIA) is a signal peptide. The propeptide at 20–65 (SPVEKRSAFSVEQVPHTTYLKNGPAQKVKTLRKYGKPVPQSLLDAA) is activation peptide. Residues 97-404 (YLSPVTVGST…PDSPPRIGLA (308 aa)) enclose the Peptidase A1 domain. Residues aspartate 113 and aspartate 293 contribute to the active site. An intrachain disulfide couples cysteine 329 to cysteine 364. Asparagine 335 is a glycosylation site (N-linked (GlcNAc...) asparagine).

It belongs to the peptidase A1 family. In terms of assembly, monomer.

It is found in the secreted. In terms of biological role, secreted aspartic endopeptidase that allows assimilation of proteinaceous substrates. The scissile peptide bond is attacked by a nucleophilic water molecule activated by two aspartic residues in the active site. Shows a broad primary substrate specificity. Favors hydrophobic residues at the P1 and P1' positions. The protein is Aspartic protease pepA of Leptosphaeria maculans (strain JN3 / isolate v23.1.3 / race Av1-4-5-6-7-8) (Blackleg fungus).